Consider the following 309-residue polypeptide: GalNAc(5)-diNAcBac-PP-undecaprenol beta-1,3-glucosyltransferase (309 aa).

The chain crosses the membrane as a helical span at residues 273–291 (SLSIKINAPALILLILSII).

It belongs to the glycosyltransferase 2 family.

It localises to the membrane. It catalyses the reaction [alpha-D-GalNAc-(1-&gt;4)]4-alpha-D-GalNAc-(1-&gt;3)-alpha-D-diNAcBac-tri-trans,hepta-cis-undecaprenyl diphosphate + UDP-alpha-D-glucose = [alpha-D-GalNAc-(1-&gt;4)]2-[beta-D-Glc-(1-&gt;3)]-[alpha-D-GalNAc-(1-&gt;4)]2-alpha-D-GalNAc-(1-&gt;3)-alpha-D-diNAcBac-tri-trans,hepta-cis-undecaprenyl diphosphate + UDP + H(+). It functions in the pathway protein modification; protein glycosylation. In terms of biological role, glucosyltransferase that adds he final branching glucose to complete the final heptasaccharide structure in the N-linked protein glycosylation pathway. The chain is GalNAc(5)-diNAcBac-PP-undecaprenol beta-1,3-glucosyltransferase (pglI) from Campylobacter jejuni subsp. jejuni serotype O:2 (strain ATCC 700819 / NCTC 11168).